The following is a 165-amino-acid chain: Large ribosomal subunit protein uL15 (165 aa).

The span at 1–30 shows a compositional bias: basic residues; the sequence is MTNKKRRQRGSRTHGGGTHKNRRGAGHRGG. Disordered regions lie at residues 1–39 and 137–165; these read MTNK…RAKH and AGGE…DDEA. Acidic residues predominate over residues 150–165; that stretch reads AADESENTSDDEDDEA.

The protein belongs to the universal ribosomal protein uL15 family. Part of the 50S ribosomal subunit.

Binds to the 23S rRNA. This Halorubrum lacusprofundi (strain ATCC 49239 / DSM 5036 / JCM 8891 / ACAM 34) protein is Large ribosomal subunit protein uL15.